The primary structure comprises 784 residues: Transcription factor kayak (784 aa).

Low complexity-rich tracts occupy residues 97-106, 115-126, and 198-227; these read QPTQSAYQQQ, NNNNNSNNNANM, and QQQQ…QQQQ. Disordered regions lie at residues 97–126, 196–231, 358–404, and 421–464; these read QPTQ…NANM, YNQQ…HLPT, PGSD…GNGS, and SGRG…KRRI. A compositionally biased stretch (polar residues) spans 365 to 378; it reads SNGSWNEGQLNDDQ. The span at 380–397 shows a compositional bias: low complexity; the sequence is TTDTSSAATDSTSYQNGG. Residues 421-438 are compositionally biased toward polar residues; sequence SGRGSGLAANSTTSNSAT. Residues 459-522 form the bZIP domain; the sequence is EEKRRIRRER…SQLEYVLQTH (64 aa). Positions 461–463 are basic motif; the sequence is KRR. The tract at residues 464–471 is leucine-zipper; that stretch reads IRRERNKL. A Phosphoserine modification is found at S594. Disordered stretches follow at residues 616 to 635 and 759 to 784; these read QDGA…TPAK and PTCS…LVSL.

Belongs to the bZIP family. Fos subfamily. In terms of assembly, homodimer. Heterodimer with Jra. The kay-Jra heterodimer binds more stably to the AP-1 site than either of the two proteins alone.

Its subcellular location is the nucleus. Functionally, developmentally regulated transcription factor AP-1 binds and recognizes the enhancer DNA sequence: 5'-TGA[CG]TCA-3'. May play a role in the function or determination of a particular subset of cells in the developing embryo. It is able to carry out its function either independently of or in conjunction with Jra. This Drosophila mojavensis (Fruit fly) protein is Transcription factor kayak.